The primary structure comprises 973 residues: Translation initiation factor IF-2 (973 aa).

Positions 97 to 135 (GHIDLDGGQHKKQQEEPKAKEEPKVKEEPKVKEEPKVKE) are enriched in basic and acidic residues. 2 disordered regions span residues 97-343 (GHID…EDVQ) and 353-372 (LTNK…DKRD). A compositionally biased stretch (low complexity) spans 136–155 (APAAPAAQAPVKPAQPAQAP). Basic and acidic residues-rich tracts occupy residues 156-175 (TEKK…KTVE), 183-204 (PKVE…DDNL), 212-224 (LESK…KIDL), and 237-250 (TKEE…EKQK). Low complexity predominate over residues 252-266 (NNNRPGNNSNGPGAP). Composition is skewed to basic and acidic residues over residues 315–326 (PNRDDRPNNDRK) and 333–343 (VKAEVSEEDVQ). A tr-type G domain is found at 472–642 (ARPPIVTVMG…LLEADLLDLK (171 aa)). The G1 stretch occupies residues 481–488 (GHVDHGKT). Residue 481 to 488 (GHVDHGKT) participates in GTP binding. Residues 506-510 (GITQH) are G2. Residues 528 to 531 (DTPG) are G3. Residues 528 to 532 (DTPGH) and 582 to 585 (NKID) each bind GTP. The segment at 582 to 585 (NKID) is G4. The G5 stretch occupies residues 618-620 (SAK).

Belongs to the TRAFAC class translation factor GTPase superfamily. Classic translation factor GTPase family. IF-2 subfamily.

The protein resides in the cytoplasm. Its function is as follows. One of the essential components for the initiation of protein synthesis. Protects formylmethionyl-tRNA from spontaneous hydrolysis and promotes its binding to the 30S ribosomal subunits. Also involved in the hydrolysis of GTP during the formation of the 70S ribosomal complex. This is Translation initiation factor IF-2 from Parabacteroides distasonis (strain ATCC 8503 / DSM 20701 / CIP 104284 / JCM 5825 / NCTC 11152).